The primary structure comprises 247 residues: 6-carboxyhexanoate--CoA ligase (247 aa).

It belongs to the BioW family. In terms of assembly, homodimer. Mg(2+) serves as cofactor.

The enzyme catalyses heptanedioate + ATP + CoA = 6-carboxyhexanoyl-CoA + AMP + diphosphate. It participates in metabolic intermediate metabolism; pimeloyl-CoA biosynthesis; pimeloyl-CoA from pimelate: step 1/1. Functionally, catalyzes the transformation of pimelate into pimeloyl-CoA with concomitant hydrolysis of ATP to AMP. The protein is 6-carboxyhexanoate--CoA ligase of Corynebacterium diphtheriae (strain ATCC 700971 / NCTC 13129 / Biotype gravis).